Reading from the N-terminus, the 352-residue chain is Phenylalanine--tRNA ligase alpha subunit (352 aa).

E258 provides a ligand contact to Mg(2+).

The protein belongs to the class-II aminoacyl-tRNA synthetase family. Phe-tRNA synthetase alpha subunit type 1 subfamily. In terms of assembly, tetramer of two alpha and two beta subunits. Requires Mg(2+) as cofactor.

Its subcellular location is the cytoplasm. The catalysed reaction is tRNA(Phe) + L-phenylalanine + ATP = L-phenylalanyl-tRNA(Phe) + AMP + diphosphate + H(+). The chain is Phenylalanine--tRNA ligase alpha subunit from Staphylococcus aureus (strain bovine RF122 / ET3-1).